The chain runs to 527 residues: Protein disulfide-isomerase A2 (527 aa).

An N-terminal signal peptide occupies residues 1–20 (MDKQLLPVLLLLLGVSGSWG). The interval 20–41 (GQGEEPGGPSEVLPEEPTGEEV) is disordered. The region spanning 29 to 155 (SEVLPEEPTG…IAEWLRRRVG (127 aa)) is the Thioredoxin 1 domain. Catalysis depends on nucleophile residues Cys74 and Cys77. Residues Cys74 and Cys77 are joined by a disulfide bond. 2 N-linked (GlcNAc...) asparagine glycosylation sites follow: Asn130 and Asn287. One can recognise a Thioredoxin 2 domain in the interval 355–499 (VIAITAASVA…FSKFLDSGGH (145 aa)). Residues Cys421 and Cys424 each act as nucleophile in the active site. The cysteines at positions 421 and 424 are disulfide-linked. The disordered stretch occupies residues 495 to 527 (DSGGHLPKEEPKEPAASAPEAQANSTLGPKEEL). A glycan (N-linked (GlcNAc...) asparagine) is linked at Asn518. The Prevents secretion from ER signature appears at 524–527 (KEEL).

The protein belongs to the protein disulfide isomerase family. In terms of assembly, part of a large chaperone multiprotein complex comprising DNAJB11, HSP90B1, HSPA5, HYOU, PDIA2, PDIA4, PDIA6, PPIB, SDF2L1, UGGT1 and very small amounts of ERP29, but not, or at very low levels, CALR nor CANX. Glycosylated. In terms of tissue distribution, highly expressed in pancreas.

It localises to the endoplasmic reticulum lumen. The catalysed reaction is Catalyzes the rearrangement of -S-S- bonds in proteins.. Acts as an intracellular estrogen-binding protein. May be involved in modulating cellular levels and biological functions of estrogens in the pancreas. May act as a chaperone that inhibits aggregation of misfolded proteins. The chain is Protein disulfide-isomerase A2 from Mus musculus (Mouse).